An 82-amino-acid chain; its full sequence is MEREKIFQELKNILKDTVTVEEEEITMESDLVNDLNLDSLDLVDLALSVEQVFGFEFSDEQLQQIKTVKDVVDIIESNLYTK.

A Carrier domain is found at 4–79; sequence EKIFQELKNI…DVVDIIESNL (76 aa). Ser-39 carries the post-translational modification O-(pantetheine 4'-phosphoryl)serine.

Belongs to the acyl carrier protein (ACP) family. Post-translationally, 4'-phosphopantetheine is transferred from CoA to a specific serine of apo-ACP by AcpS. This modification is essential for activity because fatty acids are bound in thioester linkage to the sulfhydryl of the prosthetic group.

The protein localises to the cytoplasm. Its pathway is lipid metabolism; fatty acid biosynthesis. Functionally, carrier of the growing fatty acid chain in fatty acid biosynthesis. This Coprothermobacter proteolyticus (strain ATCC 35245 / DSM 5265 / OCM 4 / BT) protein is Acyl carrier protein.